A 241-amino-acid chain; its full sequence is Glucosamine-6-phosphate deaminase (241 aa).

Catalysis depends on aspartate 67, which acts as the Proton acceptor; for enolization step. The active-site For ring-opening step is asparagine 136. Residue histidine 138 is the Proton acceptor; for ring-opening step of the active site. Glutamate 143 serves as the catalytic For ring-opening step.

This sequence belongs to the glucosamine/galactosamine-6-phosphate isomerase family. NagB subfamily.

It catalyses the reaction alpha-D-glucosamine 6-phosphate + H2O = beta-D-fructose 6-phosphate + NH4(+). Its pathway is amino-sugar metabolism; N-acetylneuraminate degradation; D-fructose 6-phosphate from N-acetylneuraminate: step 5/5. In terms of biological role, catalyzes the reversible isomerization-deamination of glucosamine 6-phosphate (GlcN6P) to form fructose 6-phosphate (Fru6P) and ammonium ion. This is Glucosamine-6-phosphate deaminase from Clostridium novyi (strain NT).